We begin with the raw amino-acid sequence, 101 residues long: Urease subunit beta (101 aa).

This sequence belongs to the urease beta subunit family. As to quaternary structure, heterotrimer of UreA (gamma), UreB (beta) and UreC (alpha) subunits. Three heterotrimers associate to form the active enzyme.

Its subcellular location is the cytoplasm. The catalysed reaction is urea + 2 H2O + H(+) = hydrogencarbonate + 2 NH4(+). It functions in the pathway nitrogen metabolism; urea degradation; CO(2) and NH(3) from urea (urease route): step 1/1. This chain is Urease subunit beta, found in Cereibacter sphaeroides (strain ATCC 17025 / ATH 2.4.3) (Rhodobacter sphaeroides).